The primary structure comprises 157 residues: Glycine-rich RNA-binding protein (157 aa).

In terms of domain architecture, RRM spans 6–84 (YRCFVGGLAW…RNITVNEAQS (79 aa)). Residues 70-157 (QELDGRNITV…YGGGGGGSRW (88 aa)) are disordered. Gly residues-rich tracts occupy residues 86 to 138 (GSGG…GGYG) and 145 to 157 (DGGYGGGGGGSRW).

Functionally, may play a role in the biosynthesis and processing of heterogeneous nuclear RNA and in the maturation of specific mRNAs in response to wounding. This chain is Glycine-rich RNA-binding protein, found in Daucus carota (Wild carrot).